Reading from the N-terminus, the 291-residue chain is uncharacterized protein (291 aa).

Disordered regions lie at residues 29 to 50 and 168 to 291; these read SEKP…LRDS and RKVK…AELK. Serine 50 is subject to Phosphoserine. 2 stretches are compositionally biased toward polar residues: residues 176–186 and 205–217; these read NSKNPSKTGTP and QKNS…SKLI. Residues 221 to 237 are compositionally biased toward basic and acidic residues; sequence YKDEWLQQQKAEADRRT. A compositionally biased stretch (polar residues) spans 280–291; that stretch reads SSPSESTPAELK.

This is an uncharacterized protein from Mus musculus (Mouse).